A 297-amino-acid polypeptide reads, in one-letter code: Phosphatidylglycerol--prolipoprotein diacylglyceryl transferase (297 aa).

The next 4 helical transmembrane spans lie at F20–I40, I58–E78, I104–I124, and I133–G153. Residue R154 participates in a 1,2-diacyl-sn-glycero-3-phospho-(1'-sn-glycerol) binding. The next 3 helical transmembrane spans lie at T194–Y214, G225–L245, and A266–L286.

The protein belongs to the Lgt family.

The protein localises to the cell inner membrane. The enzyme catalyses L-cysteinyl-[prolipoprotein] + a 1,2-diacyl-sn-glycero-3-phospho-(1'-sn-glycerol) = an S-1,2-diacyl-sn-glyceryl-L-cysteinyl-[prolipoprotein] + sn-glycerol 1-phosphate + H(+). It participates in protein modification; lipoprotein biosynthesis (diacylglyceryl transfer). In terms of biological role, catalyzes the transfer of the diacylglyceryl group from phosphatidylglycerol to the sulfhydryl group of the N-terminal cysteine of a prolipoprotein, the first step in the formation of mature lipoproteins. The chain is Phosphatidylglycerol--prolipoprotein diacylglyceryl transferase from Prochlorococcus marinus subsp. pastoris (strain CCMP1986 / NIES-2087 / MED4).